Consider the following 307-residue polypeptide: MTVTAAMVKDLREKTGAGMMDCKKALAETNGDMEAAIDWLRAKGIAKADKKSGRTAAEGLIGIASAGNKAVVVEINSETDFVARNDAFQDLVRGIANVALGTDGTVEAVSQATYPATGKSVEDSVKDAIATIGENMTLRRAAALKVEDGVVATYIHNAAGDGIGKLGVLVALKSTGNKEALNAIGRQVAMHVAATNPLAVRPSEIDPAVAERERNVFIEQSRASGKPDNIIEKMVDGRMRKFFEEVALLSQAFVMNPDQTVEAAIKEAEKTVGAPIEVAGIARLLLGEGVQKEESDFAAEVAAAAKG.

Positions 79–82 (TDFV) are involved in Mg(2+) ion dislocation from EF-Tu.

The protein belongs to the EF-Ts family.

It localises to the cytoplasm. In terms of biological role, associates with the EF-Tu.GDP complex and induces the exchange of GDP to GTP. It remains bound to the aminoacyl-tRNA.EF-Tu.GTP complex up to the GTP hydrolysis stage on the ribosome. This chain is Elongation factor Ts, found in Sinorhizobium fredii (strain NBRC 101917 / NGR234).